A 426-amino-acid polypeptide reads, in one-letter code: Diaminobutyrate--2-oxoglutarate transaminase (426 aa).

Lys274 carries the N6-(pyridoxal phosphate)lysine modification.

This sequence belongs to the class-III pyridoxal-phosphate-dependent aminotransferase family. It depends on pyridoxal 5'-phosphate as a cofactor.

It catalyses the reaction L-2,4-diaminobutanoate + 2-oxoglutarate = L-aspartate 4-semialdehyde + L-glutamate. Its pathway is amine and polyamine biosynthesis; ectoine biosynthesis; L-ectoine from L-aspartate 4-semialdehyde: step 1/3. In terms of biological role, catalyzes reversively the conversion of L-aspartate beta-semialdehyde (ASA) to L-2,4-diaminobutyrate (DABA) by transamination with L-glutamate. The polypeptide is Diaminobutyrate--2-oxoglutarate transaminase (ectB) (Oceanobacillus iheyensis (strain DSM 14371 / CIP 107618 / JCM 11309 / KCTC 3954 / HTE831)).